A 193-amino-acid chain; its full sequence is C-type lectin domain family 3 member A homolog (193 aa).

The first 24 residues, 1 to 24, serve as a signal peptide directing secretion; sequence MAQAGLLIWLFFTILLLDLTCTQS. 3 disulfides stabilise this stretch: C66–C76, C93–C188, and C164–C180. The 118-residue stretch at 72-189 folds into the C-type lectin domain; the sequence is IHKKCYLSFE…CRSLKKYICE (118 aa).

Its subcellular location is the secreted. This chain is C-type lectin domain family 3 member A homolog (clec3a), found in Xenopus laevis (African clawed frog).